A 93-amino-acid chain; its full sequence is uncharacterized protein (93 aa).

The protein to E.coli YdbD C-terminal region.

This is an uncharacterized protein from Escherichia coli (strain K12).